A 1151-amino-acid polypeptide reads, in one-letter code: Ankyrin and IPT/TIG repeat-containing protein C26H5.05 (1151 aa).

Disordered stretches follow at residues 77 to 104 (NLPS…AECL), 452 to 511 (KSRN…ENSR), and 516 to 535 (QLSA…KSVE). Residues 87–98 (SHASSPNLSNSQ) are compositionally biased toward polar residues. The segment covering 452 to 463 (KSRNLTKSEKTG) has biased composition (basic and acidic residues). Polar residues-rich tracts occupy residues 464 to 496 (KSNS…SDNP) and 517 to 532 (LSAS…STLK). An IPT/TIG domain is found at 658–739 (PLISRIIPNK…SSEAPVMFTY (82 aa)). 2 ANK repeats span residues 861–890 (SGRS…DVNK) and 894–923 (LGYT…KPDV). The disordered stretch occupies residues 1041–1067 (PPPYSEFADDTTAQAGSSKRDSAISED). Residues 1058–1067 (SKRDSAISED) show a composition bias toward basic and acidic residues. The helical transmembrane segment at 1113-1133 (MDFMLFSFWLPALLLLSIFGL) threads the bilayer.

It is found in the vacuole membrane. The polypeptide is Ankyrin and IPT/TIG repeat-containing protein C26H5.05 (Schizosaccharomyces pombe (strain 972 / ATCC 24843) (Fission yeast)).